A 115-amino-acid polypeptide reads, in one-letter code: uncharacterized protein (115 aa).

It belongs to the herpesviridae BLRF2 family.

This is an uncharacterized protein from Saimiriine herpesvirus 2 (strain 11) (SaHV-2).